Here is a 316-residue protein sequence, read N- to C-terminus: MTMTAHTRETTSMSDAQDKAGTLIEALPWIQRFAGTTMVIKYGGNAMVNDDLRRAFAEDIVFLHHVGIHPVVVHGGGPQINSMLSRLGIESEFKGGLRVTTPEAMDVVRMVLTGQVGRELVGLINSHGPYAVGMSGEDGGLLRAVRTGTVVDGEEVDLGLVGEVVGVDPAGIKDILDAGRIPVISTVAPEILDDGNGSGPTTGQVLNVNADTAAAAVASALGATKLVILTDVEGLYANWPDKSSLISSLTASELRDMLPRLESGMIPKMAACLKAIDEGVERAHIVDGRLPHSMLLETFTTAGIGTQVVPDEEVNA.

Substrate is bound by residues 76-77, arginine 98, and asparagine 207; that span reads GG.

The protein belongs to the acetylglutamate kinase family. ArgB subfamily.

The protein resides in the cytoplasm. It carries out the reaction N-acetyl-L-glutamate + ATP = N-acetyl-L-glutamyl 5-phosphate + ADP. It participates in amino-acid biosynthesis; L-arginine biosynthesis; N(2)-acetyl-L-ornithine from L-glutamate: step 2/4. Catalyzes the ATP-dependent phosphorylation of N-acetyl-L-glutamate. The sequence is that of Acetylglutamate kinase from Paenarthrobacter aurescens (strain TC1).